Consider the following 230-residue polypeptide: DNA ADP-ribosyl transferase (230 aa).

Residues 26–230 (WIVWHFTHAD…KYVIKPGMYY (205 aa)) enclose the DarT domain. NAD(+)-binding positions include 30 to 32 (HFT), G39, L47, and R67. Residue R67 is the Proton acceptor of the active site. E183 is a catalytic residue.

The protein belongs to the DarT ADP-ribosyltransferase family. As to quaternary structure, interacts with cognate antitoxin DarG (via C-terminus); this heterodimeric complex neutralizes the toxic effect of DarT by preventing ssDNA binding to DarT and consequently inactivating the toxin by direct protein-protein interactions.

It carries out the reaction a thymidine in DNA + NAD(+) = an N-(ADP-alpha-D-ribosyl)-thymidine in DNA + nicotinamide + H(+). Toxic component of the hybrid type II/IV toxin-antitoxin (TA) system DarTG, which plays a crucial role in controlling bacterial growth and bacteriophage infection. ADP-ribosylates ssDNA, preferentially in the motif TTTW. In case of phage infection, DarT toxin ADP-ribosylates DNA, which inhibits both viral DNA and RNA synthesis and leads to abortive infection. Its toxic effect is neutralized by cognate antitoxin DarG. The chain is DNA ADP-ribosyl transferase from Mycobacterium bovis (strain BCG / Pasteur 1173P2).